The chain runs to 119 residues: Large ribosomal subunit protein bL20 (119 aa).

It belongs to the bacterial ribosomal protein bL20 family.

In terms of biological role, binds directly to 23S ribosomal RNA and is necessary for the in vitro assembly process of the 50S ribosomal subunit. It is not involved in the protein synthesizing functions of that subunit. The chain is Large ribosomal subunit protein bL20 from Shewanella woodyi (strain ATCC 51908 / MS32).